A 448-amino-acid chain; its full sequence is MAKKTSLFECQHCGFTSPKWLGKCVQCNAWESFIELNQAQKEVLNTLKKPIPQAQKSVSIAAIEHEEVIKFSSTQSELDIVLGGGIAKGGLYLVGGSPGVGKSTLLLKVASGLAKNQQKVLYVSGEESLSQIKMRAIRLDCIEKELYLLNEINWPVIKANIESENYFACVIDSIQTLYSPEISSAPGSISQVREITFELMRLAKTRDIAIFIIGHITKEGSIAGPRVLEHMVDSVLYFEGDPSRELRILRSFKNRFGPTSEIGLFEMKEQGLVSAKEASSLFFSKEEPMEGSAITITLEGSRALILEIQALVSECSFGSPKRLANGFDTNRLNMLIALLEKKLEIPLNRHDVFINVSGGIKISEPACDLAVIASILSSFKNRKIDNKTAFLGEVSLNGRILEAPNLNARLKEMENYGFLKAILPKKPSQKTSIKCYEANAVGKIVEWM.

Residues 10–27 form a C4-type zinc finger; sequence CQHCGFTSPKWLGKCVQC. An ATP-binding site is contributed by 96–103; it reads GSPGVGKS. A RadA KNRFG motif motif is present at residues 253–257; that stretch reads KNRFG. The tract at residues 351-448 is lon-protease-like; sequence DVFINVSGGI…NAVGKIVEWM (98 aa).

This sequence belongs to the RecA family. RadA subfamily.

Functionally, DNA-dependent ATPase involved in processing of recombination intermediates, plays a role in repairing DNA breaks. Stimulates the branch migration of RecA-mediated strand transfer reactions, allowing the 3' invading strand to extend heteroduplex DNA faster. Binds ssDNA in the presence of ADP but not other nucleotides, has ATPase activity that is stimulated by ssDNA and various branched DNA structures, but inhibited by SSB. Does not have RecA's homology-searching function. This is DNA repair protein RadA from Helicobacter pylori (strain ATCC 700392 / 26695) (Campylobacter pylori).